A 336-amino-acid chain; its full sequence is Glyceraldehyde-3-phosphate dehydrogenase (336 aa).

NAD(+) is bound by residues 12-13 (RI), aspartate 34, arginine 78, and threonine 121. D-glyceraldehyde 3-phosphate contacts are provided by residues 151 to 153 (SCT), threonine 182, arginine 199, 212 to 213 (TG), and arginine 235. Cysteine 152 (nucleophile) is an active-site residue. An NAD(+)-binding site is contributed by asparagine 316.

The protein belongs to the glyceraldehyde-3-phosphate dehydrogenase family. Homotetramer.

The protein localises to the cytoplasm. It carries out the reaction D-glyceraldehyde 3-phosphate + phosphate + NAD(+) = (2R)-3-phospho-glyceroyl phosphate + NADH + H(+). It functions in the pathway carbohydrate degradation; glycolysis; pyruvate from D-glyceraldehyde 3-phosphate: step 1/5. Its function is as follows. Catalyzes the oxidative phosphorylation of glyceraldehyde 3-phosphate (G3P) to 1,3-bisphosphoglycerate (BPG) using the cofactor NAD. The first reaction step involves the formation of a hemiacetal intermediate between G3P and a cysteine residue, and this hemiacetal intermediate is then oxidized to a thioester, with concomitant reduction of NAD to NADH. The reduced NADH is then exchanged with the second NAD, and the thioester is attacked by a nucleophilic inorganic phosphate to produce BPG. The chain is Glyceraldehyde-3-phosphate dehydrogenase (gap) from Streptococcus pyogenes serotype M1.